The following is a 264-amino-acid chain: N-carbamoylsarcosine amidase (264 aa).

Residue Cys177 is the Nucleophile of the active site. The interval 240 to 264 (TVPKTLSDPQPEVEAPADPVFAEQH) is disordered.

In terms of assembly, homotetramer. The cofactor is sulfate.

The catalysed reaction is N-carbamoylsarcosine + H2O + 2 H(+) = sarcosine + NH4(+) + CO2. It participates in amine and polyamine degradation; creatinine degradation; sarcosine from creatinine: step 3/3. This is N-carbamoylsarcosine amidase from Arthrobacter sp.